The sequence spans 93 residues: MSILDYLRSLQKRRSASIAKERLQIIVAHERNGLSRRTLDFLPLLQKELLDVVRKYVEVSDSQIKVNLEKNGNYEVLEVNIALADAEGRFSMS.

Belongs to the MinE family.

Functionally, prevents the cell division inhibition by proteins MinC and MinD at internal division sites while permitting inhibition at polar sites. This ensures cell division at the proper site by restricting the formation of a division septum at the midpoint of the long axis of the cell. This chain is Cell division topological specificity factor, found in Syntrophus aciditrophicus (strain SB).